Consider the following 509-residue polypeptide: DEAD-box ATP-dependent RNA helicase CshA (509 aa).

A Q motif motif is present at residues 2–30 (QNFKELGISDKTVQTLEAMGFKEPTPIQK). Positions 33-203 (IPYALEGDDI…QQFMKAPKII (171 aa)) constitute a Helicase ATP-binding domain. Residue 46–53 (AQTGTGKT) participates in ATP binding. The DEAD box motif lies at 150-153 (DEAD). Positions 214–375 (QIDEYYTIVK…LRPPHRKEVL (162 aa)) constitute a Helicase C-terminal domain. Composition is skewed to basic residues over residues 440–459 (ARKN…KRGN) and 467–482 (RRSK…KKNQ). The segment at 440-509 (ARKNRSSKGG…KGRTFADHQK (70 aa)) is disordered. Positions 483-492 (KKFDRRDKQQ) are enriched in basic and acidic residues.

Belongs to the DEAD box helicase family. CshA subfamily. As to quaternary structure, oligomerizes, may be a member of the RNA degradosome.

The protein localises to the cytoplasm. It catalyses the reaction ATP + H2O = ADP + phosphate + H(+). Functionally, DEAD-box RNA helicase possibly involved in RNA degradation. Unwinds dsRNA in both 5'- and 3'-directions, has RNA-dependent ATPase activity. This chain is DEAD-box ATP-dependent RNA helicase CshA, found in Staphylococcus epidermidis (strain ATCC 35984 / DSM 28319 / BCRC 17069 / CCUG 31568 / BM 3577 / RP62A).